Consider the following 297-residue polypeptide: Coatomer subunit epsilon-2 (297 aa).

This sequence belongs to the COPE family. In terms of assembly, oligomeric complex that consists of at least the alpha, beta, beta', gamma, delta, epsilon and zeta subunits.

It is found in the cytoplasm. The protein resides in the golgi apparatus membrane. Its subcellular location is the cytoplasmic vesicle. It localises to the COPI-coated vesicle membrane. Functionally, the coatomer is a cytosolic protein complex that binds to dilysine motifs and reversibly associates with Golgi non-clathrin-coated vesicles, which further mediate biosynthetic protein transport from the ER, via the Golgi up to the trans Golgi network. The coatomer complex is required for budding from Golgi membranes, and is essential for the retrograde Golgi-to-ER transport of dilysine-tagged proteins. The polypeptide is Coatomer subunit epsilon-2 (Oryza sativa subsp. indica (Rice)).